The chain runs to 283 residues: Protein FdhE homolog (283 aa).

Belongs to the FdhE family.

The protein resides in the cytoplasm. Necessary for formate dehydrogenase activity. This Aquifex aeolicus (strain VF5) protein is Protein FdhE homolog.